The following is a 145-amino-acid chain: uncharacterized protein (145 aa).

This is an uncharacterized protein from Escherichia coli (strain K12).